The chain runs to 466 residues: Methylenetetrahydrofolate--tRNA-(uracil-5-)-methyltransferase TrmFO (466 aa).

10–15 is a binding site for FAD; the sequence is GGGLAG.

The protein belongs to the MnmG family. TrmFO subfamily. The cofactor is FAD.

The protein localises to the cytoplasm. The catalysed reaction is uridine(54) in tRNA + (6R)-5,10-methylene-5,6,7,8-tetrahydrofolate + NADH + H(+) = 5-methyluridine(54) in tRNA + (6S)-5,6,7,8-tetrahydrofolate + NAD(+). The enzyme catalyses uridine(54) in tRNA + (6R)-5,10-methylene-5,6,7,8-tetrahydrofolate + NADPH + H(+) = 5-methyluridine(54) in tRNA + (6S)-5,6,7,8-tetrahydrofolate + NADP(+). In terms of biological role, catalyzes the folate-dependent formation of 5-methyl-uridine at position 54 (M-5-U54) in all tRNAs. This chain is Methylenetetrahydrofolate--tRNA-(uracil-5-)-methyltransferase TrmFO, found in Phenylobacterium zucineum (strain HLK1).